The chain runs to 82 residues: U10-myrmicitoxin-Mri1c (82 aa).

The first 26 residues, 1–26 (MRLSYVSLTLAIIFVMAIVHAPETEA), serve as a signal peptide directing secretion. The propeptide occupies 27 to 52 (KAYPEADAVGEASAVGEADAVGVADP). Isoleucine amide is present on Ile-81.

It belongs to the formicidae venom precursor-01 superfamily. In terms of tissue distribution, expressed by the venom gland.

Its subcellular location is the secreted. Induces paralysis 5 minutes after injection into blowflies (L.caesar). In most cases is not lethal 24 hours after injection, but paralysis is irreversible. May have antimicrobial properties, like most ant linear peptides. This Manica rubida (European giant red ant) protein is U10-myrmicitoxin-Mri1c.